The following is a 438-amino-acid chain: Hydrogenobyrinate a,c-diamide synthase (438 aa).

Positions 247–438 (RIALAEDAAF…TFFHAIAKGG (192 aa)) constitute a GATase cobBQ-type domain. Residue cysteine 329 is the Nucleophile of the active site.

The protein belongs to the CobB/CbiA family. Requires Mg(2+) as cofactor.

It carries out the reaction hydrogenobyrinate + 2 L-glutamine + 2 ATP + 2 H2O = hydrogenobyrinate a,c-diamide + 2 L-glutamate + 2 ADP + 2 phosphate + 2 H(+). It functions in the pathway cofactor biosynthesis; adenosylcobalamin biosynthesis; cob(II)yrinate a,c-diamide from precorrin-2 (aerobic route): step 9/10. Catalyzes the ATP-dependent amidation of the two carboxylate groups at positions a and c of hydrogenobyrinate, using either L-glutamine or ammonia as the nitrogen source. In Agrobacterium fabrum (strain C58 / ATCC 33970) (Agrobacterium tumefaciens (strain C58)), this protein is Hydrogenobyrinate a,c-diamide synthase.